A 122-amino-acid chain; its full sequence is Large ribosomal subunit protein uL14c (122 aa).

This sequence belongs to the universal ribosomal protein uL14 family. As to quaternary structure, part of the 50S ribosomal subunit.

The protein resides in the plastid. The protein localises to the chloroplast. In terms of biological role, binds to 23S rRNA. In Angiopteris evecta (Mule's foot fern), this protein is Large ribosomal subunit protein uL14c.